A 474-amino-acid chain; its full sequence is ATP synthase subunit beta 2 (474 aa).

Position 153 to 160 (153 to 160 (GGAGVGKT)) interacts with ATP.

It belongs to the ATPase alpha/beta chains family. In terms of assembly, F-type ATPases have 2 components, CF(1) - the catalytic core - and CF(0) - the membrane proton channel. CF(1) has five subunits: alpha(3), beta(3), gamma(1), delta(1), epsilon(1). CF(0) has three main subunits: a(1), b(2) and c(9-12). The alpha and beta chains form an alternating ring which encloses part of the gamma chain. CF(1) is attached to CF(0) by a central stalk formed by the gamma and epsilon chains, while a peripheral stalk is formed by the delta and b chains.

The protein localises to the cell inner membrane. The catalysed reaction is ATP + H2O + 4 H(+)(in) = ADP + phosphate + 5 H(+)(out). Produces ATP from ADP in the presence of a proton gradient across the membrane. The catalytic sites are hosted primarily by the beta subunits. The protein is ATP synthase subunit beta 2 of Syntrophotalea carbinolica (strain DSM 2380 / NBRC 103641 / GraBd1) (Pelobacter carbinolicus).